The chain runs to 449 residues: Myb-related protein Pp1 (449 aa).

In terms of domain architecture, HTH myb-type spans 1–30 (LGNRWSAIAIPRRTDNEIKNYWNTHLKKRL). Positions 5–26 (WSAIAIPRRTDNEIKNYWNTHL) form a DNA-binding region, H-T-H motif.

It is found in the nucleus. Its function is as follows. Possible transcription activator. The sequence is that of Myb-related protein Pp1 (PP1) from Physcomitrium patens (Spreading-leaved earth moss).